A 381-amino-acid polypeptide reads, in one-letter code: Protein kinase gsk31 (381 aa).

The Protein kinase domain occupies 25–309 (YEPCRVLGSG…AIEVLTHPFF (285 aa)). Residues 31 to 39 (LGSGSFGVV) and lysine 54 contribute to the ATP site. The active-site Proton acceptor is aspartate 150. Residue serine 184 is modified to Phosphoserine. Tyrosine 185 carries the post-translational modification Phosphotyrosine.

This sequence belongs to the protein kinase superfamily. CMGC Ser/Thr protein kinase family. GSK-3 subfamily.

It carries out the reaction L-seryl-[protein] + ATP = O-phospho-L-seryl-[protein] + ADP + H(+). The catalysed reaction is L-threonyl-[protein] + ATP = O-phospho-L-threonyl-[protein] + ADP + H(+). This chain is Protein kinase gsk31 (gsk31), found in Schizosaccharomyces pombe (strain 972 / ATCC 24843) (Fission yeast).